A 456-amino-acid chain; its full sequence is Bifunctional protein GlmU (456 aa).

The segment at 1–229 (MLNNAMSVVI…LSEVEGVNNR (229 aa)) is pyrophosphorylase. UDP-N-acetyl-alpha-D-glucosamine-binding positions include 11-14 (LAAG), K25, Q76, 81-82 (GT), 103-105 (YGD), G140, E154, N169, and N227. D105 contributes to the Mg(2+) binding site. N227 is a binding site for Mg(2+). The segment at 230 to 250 (LQLSRLERVYQFEQAEKLLLA) is linker. An N-acetyltransferase region spans residues 251–456 (GVMLRDPARF…EGWRRPVKKK (206 aa)). UDP-N-acetyl-alpha-D-glucosamine contacts are provided by R333 and K351. Residue H363 is the Proton acceptor of the active site. Y366 and N377 together coordinate UDP-N-acetyl-alpha-D-glucosamine. Residues A380, 386 to 387 (NY), S405, A423, and R440 each bind acetyl-CoA.

This sequence in the N-terminal section; belongs to the N-acetylglucosamine-1-phosphate uridyltransferase family. In the C-terminal section; belongs to the transferase hexapeptide repeat family. In terms of assembly, homotrimer. Mg(2+) is required as a cofactor.

Its subcellular location is the cytoplasm. It catalyses the reaction alpha-D-glucosamine 1-phosphate + acetyl-CoA = N-acetyl-alpha-D-glucosamine 1-phosphate + CoA + H(+). It carries out the reaction N-acetyl-alpha-D-glucosamine 1-phosphate + UTP + H(+) = UDP-N-acetyl-alpha-D-glucosamine + diphosphate. Its pathway is nucleotide-sugar biosynthesis; UDP-N-acetyl-alpha-D-glucosamine biosynthesis; N-acetyl-alpha-D-glucosamine 1-phosphate from alpha-D-glucosamine 6-phosphate (route II): step 2/2. It participates in nucleotide-sugar biosynthesis; UDP-N-acetyl-alpha-D-glucosamine biosynthesis; UDP-N-acetyl-alpha-D-glucosamine from N-acetyl-alpha-D-glucosamine 1-phosphate: step 1/1. It functions in the pathway bacterial outer membrane biogenesis; LPS lipid A biosynthesis. In terms of biological role, catalyzes the last two sequential reactions in the de novo biosynthetic pathway for UDP-N-acetylglucosamine (UDP-GlcNAc). The C-terminal domain catalyzes the transfer of acetyl group from acetyl coenzyme A to glucosamine-1-phosphate (GlcN-1-P) to produce N-acetylglucosamine-1-phosphate (GlcNAc-1-P), which is converted into UDP-GlcNAc by the transfer of uridine 5-monophosphate (from uridine 5-triphosphate), a reaction catalyzed by the N-terminal domain. The protein is Bifunctional protein GlmU of Escherichia coli O7:K1 (strain IAI39 / ExPEC).